A 410-amino-acid polypeptide reads, in one-letter code: Histone-lysine N-methyltransferase SUV39H2 (410 aa).

Positions 47–105 (YEVEYLCDYKVVKDMEYYLVKWKGWPDSTNTWEPLQNLKCPLLLQQFFNDKHNYLSQVK) constitute a Chromo domain. The 59-residue stretch at 189–247 (FGCSCTDCFFEKCCPAEAGVLLAYNKNQQIKIPPGTPIYECNSRCQCGPDCPNRIVQKG) folds into the Pre-SET domain. The Zn(2+) site is built by Cys191, Cys193, Cys196, Cys201, Cys202, Cys229, Cys233, Cys235, and Cys239. The 124-residue stretch at 250–373 (YSLCIFRTSN…AGEELTFDYQ (124 aa)) folds into the SET domain. Residues 261 to 263 (CGW), Tyr304, and 330 to 331 (NH) each bind S-adenosyl-L-methionine. Cys333 is a binding site for Zn(2+). 3 positions are modified to phosphoserine: Ser381, Ser384, and Ser388. In terms of domain architecture, Post-SET spans 394-410 (ARTVCKCGAVTCRGYLN). Zn(2+)-binding residues include Cys398, Cys400, and Cys405.

It belongs to the class V-like SAM-binding methyltransferase superfamily. Histone-lysine methyltransferase family. Suvar3-9 subfamily. In terms of assembly, interacts with SMAD5. The large PER complex involved in the histone methylation is composed of at least PER2, CBX3, TRIM28, SUV39H1 and/or SUV39H2; CBX3 mediates the formation of the complex. Post-translationally, ubiquitinated by the DCX(DCAF13) E3 ubiquitin ligase complex, leading to its degradation.

Its subcellular location is the nucleus. The protein resides in the chromosome. It is found in the centromere. It carries out the reaction L-lysyl(9)-[histone H3] + 3 S-adenosyl-L-methionine = N(6),N(6),N(6)-trimethyl-L-lysyl(9)-[histone H3] + 3 S-adenosyl-L-homocysteine + 3 H(+). In terms of biological role, histone methyltransferase that specifically trimethylates 'Lys-9' of histone H3 using monomethylated H3 'Lys-9' as substrate. H3 'Lys-9' trimethylation represents a specific tag for epigenetic transcriptional repression by recruiting HP1 (CBX1, CBX3 and/or CBX5) proteins to methylated histones. Mainly functions in heterochromatin regions, thereby playing a central role in the establishment of constitutive heterochromatin at pericentric and telomere regions. H3 'Lys-9' trimethylation is also required to direct DNA methylation at pericentric repeats. SUV39H1 is targeted to histone H3 via its interaction with RB1 and is involved in many processes, such as cell cycle regulation, transcriptional repression and regulation of telomere length. May participate in regulation of higher-order chromatin organization during spermatogenesis. Recruited by the large PER complex to the E-box elements of the circadian target genes such as PER2 itself or PER1, contributes to the conversion of local chromatin to a heterochromatin-like repressive state through H3 'Lys-9' trimethylation. The polypeptide is Histone-lysine N-methyltransferase SUV39H2 (SUV39H2) (Bos taurus (Bovine)).